A 102-amino-acid chain; its full sequence is Co-chaperonin GroES (102 aa).

Belongs to the GroES chaperonin family. In terms of assembly, heptamer of 7 subunits arranged in a ring. Interacts with the chaperonin GroEL.

Its subcellular location is the cytoplasm. In terms of biological role, together with the chaperonin GroEL, plays an essential role in assisting protein folding. The GroEL-GroES system forms a nano-cage that allows encapsulation of the non-native substrate proteins and provides a physical environment optimized to promote and accelerate protein folding. GroES binds to the apical surface of the GroEL ring, thereby capping the opening of the GroEL channel. In Chlamydia muridarum (strain MoPn / Nigg), this protein is Co-chaperonin GroES.